Reading from the N-terminus, the 275-residue chain is Pantothenate synthetase (275 aa).

26–33 (MGFLHEGH) contacts ATP. The Proton donor role is filled by histidine 33. (R)-pantoate is bound at residue glutamine 57. Glutamine 57 is a beta-alanine binding site. 143-146 (GQKD) contributes to the ATP binding site. Glutamine 149 serves as a coordination point for (R)-pantoate. ATP contacts are provided by residues alanine 172 and 180 to 183 (RSSR).

The protein belongs to the pantothenate synthetase family. As to quaternary structure, homodimer.

Its subcellular location is the cytoplasm. The catalysed reaction is (R)-pantoate + beta-alanine + ATP = (R)-pantothenate + AMP + diphosphate + H(+). The protein operates within cofactor biosynthesis; (R)-pantothenate biosynthesis; (R)-pantothenate from (R)-pantoate and beta-alanine: step 1/1. In terms of biological role, catalyzes the condensation of pantoate with beta-alanine in an ATP-dependent reaction via a pantoyl-adenylate intermediate. This Gluconobacter oxydans (strain 621H) (Gluconobacter suboxydans) protein is Pantothenate synthetase.